The chain runs to 63 residues: Large ribosomal subunit protein bL35 (63 aa).

The span at 1-15 shows a compositional bias: basic residues; that stretch reads MPKIKTHRGAAKRFK. The segment at 1–26 is disordered; sequence MPKIKTHRGAAKRFKQTAGGKWKGSH.

This sequence belongs to the bacterial ribosomal protein bL35 family.

The chain is Large ribosomal subunit protein bL35 from Pelotomaculum thermopropionicum (strain DSM 13744 / JCM 10971 / SI).